The primary structure comprises 649 residues: Serine/threonine kinase-like domain-containing protein STKLD1 (649 aa).

A compositionally biased stretch (basic and acidic residues) spans 1-13 (MLGPESDGRRPTQ). Residues 1–23 (MLGPESDGRRPTQGERGPGYPGE) are disordered. One can recognise a Protein kinase domain in the interval 28–379 (YQVLYQLNPG…CNQAITSAVL (352 aa)). ATP contacts are provided by residues 34–42 (LNPGALGVN) and Lys57. Residues 621–640 (FSKPGLPPGGSPQPGCTASG) form a disordered region.

The protein belongs to the protein kinase superfamily. Ser/Thr protein kinase family. STKL subfamily.

This chain is Serine/threonine kinase-like domain-containing protein STKLD1 (STKLD1), found in Macaca fascicularis (Crab-eating macaque).